A 142-amino-acid polypeptide reads, in one-letter code: Putative pre-16S rRNA nuclease (142 aa).

It belongs to the YqgF nuclease family.

It is found in the cytoplasm. Its function is as follows. Could be a nuclease involved in processing of the 5'-end of pre-16S rRNA. The sequence is that of Putative pre-16S rRNA nuclease from Lactobacillus acidophilus (strain ATCC 700396 / NCK56 / N2 / NCFM).